The chain runs to 254 residues: PAXIP1-associated glutamate-rich protein 1 (254 aa).

Disordered stretches follow at residues M1–E111 and L127–Y254. Over residues K45–S62 the composition is skewed to basic and acidic residues. The span at E78–L98 shows a compositional bias: acidic residues. The sufficient for interaction with NCOA1 stretch occupies residues Y116–E160. Position 138 is a phosphothreonine (T138). A compositionally biased stretch (acidic residues) spans Q142–E159. A phosphoserine mark is found at S143 and S148. The tract at residues K161–Y254 is sufficient for interaction with ESR1. Basic and acidic residues predominate over residues Q195–R223. Position 237 is a phosphoserine (S237).

Component of the KMT2 family MLL2/MLL3 complex (also named ASCOM complex), at least composed of the HMTs KMT2D and/or KMT2C, the common subunits ASH2L, RBBP5, WDR5 and DPY30, and the complex type-specific subunits PAXIP1/PTIP, PAGR1, NCOA6 and KDM6A; PAXIP1 is required for the association with the MLL2/MLL3 complex. Forms a constitutive complex with PAXIP1/PTIP independently of the MLL2/MLL3 complex. Interacts with NCOA1, ESR1, NR3C1, AR. Ubiquitously expressed.

It localises to the nucleus. Functionally, its association with the histone methyltransferase MLL2/MLL3 complex is suggesting a role in epigenetic transcriptional activation. However, in association with PAXIP1/PTIP is proposed to function at least in part independently of the MLL2/MLL3 complex. Proposed to be recruited by PAXIP1 to sites of DNA damage where the PAGR1:PAXIP1 complex is required for cell survival in response to DNA damage independently of the MLL2/MLL3 complex. However, its function in DNA damage has been questioned. During immunoglobulin class switching in activated B-cells is involved in transcription regulation of downstream switch regions at the immunoglobulin heavy-chain (Igh) locus independently of the MLL2/MLL3 complex. Involved in both estrogen receptor-regulated gene transcription and estrogen-stimulated G1/S cell-cycle transition. Acts as a transcriptional cofactor for nuclear hormone receptors. Inhibits the induction properties of several steroid receptors such as NR3C1, AR and PPARG; the mechanism of inhibition appears to be gene-dependent. The protein is PAXIP1-associated glutamate-rich protein 1 (PAGR1) of Homo sapiens (Human).